The chain runs to 152 residues: UPF0225 protein YchJ (152 aa).

It belongs to the UPF0225 family.

This is UPF0225 protein YchJ from Escherichia coli O7:K1 (strain IAI39 / ExPEC).